A 478-amino-acid polypeptide reads, in one-letter code: MSFQCVKKYEDSYDKYVLAATSEKVVLPDYLDKESKKIAETIIKKNKFTAKASEKISMTLVNKKKVIEFIIIGLGEKKKLDAKNTRQYLFDGLKNIIGKVLFSFDNKDLDNIDILAEVVEHINYKFDKYFSKKKEEFLEVSYLTDKKVPKLIEGYELAKISNIVKDLVNEQAEVLNPKELADRATKLGKKFGFDVEILDEKKAQKLGMNAYLSVARAAHHRPYVIVMRYKGNAKSKYTFGLVGKGLTYDTGGLSLKPTDSMLTMRCDMGGAATMIGAMCSVAKMKLKKNVTCVVAACENSIGPNAYRPGDILTAMNGKTIEVTNTDAEGRLTLADALTYIVRKEKVNEVIDAATLTGAIMVALGEDVTGVFTNDEKMARKVIDASENWNEYFWQMPMFDLYKKNLKSSYADMQNTGVRWGGSTNAAKFLEEFIDDTKWVHLDIAGTAWASGANPYYSQKGATGQVFRTVYSYIKDNKN.

Mn(2+) contacts are provided by lysine 244 and aspartate 249. Lysine 256 is an active-site residue. Positions 267, 326, and 328 each coordinate Mn(2+). Arginine 330 is an active-site residue.

This sequence belongs to the peptidase M17 family. Mn(2+) serves as cofactor.

The protein resides in the cytoplasm. The enzyme catalyses Release of an N-terminal amino acid, Xaa-|-Yaa-, in which Xaa is preferably Leu, but may be other amino acids including Pro although not Arg or Lys, and Yaa may be Pro. Amino acid amides and methyl esters are also readily hydrolyzed, but rates on arylamides are exceedingly low.. It carries out the reaction Release of an N-terminal amino acid, preferentially leucine, but not glutamic or aspartic acids.. Its function is as follows. Presumably involved in the processing and regular turnover of intracellular proteins. Catalyzes the removal of unsubstituted N-terminal amino acids from various peptides. In Fusobacterium nucleatum subsp. nucleatum (strain ATCC 25586 / DSM 15643 / BCRC 10681 / CIP 101130 / JCM 8532 / KCTC 2640 / LMG 13131 / VPI 4355), this protein is Probable cytosol aminopeptidase.